The following is a 359-amino-acid chain: AA9 family lytic polysaccharide monooxygenase C (359 aa).

An N-terminal signal peptide occupies residues 1–16 (MKTGSILAALVASASA). The Cu(2+) site is built by His-17 and His-99. 2 disulfide bridges follow: Cys-55-Cys-185 and Cys-155-Cys-243. O2 contacts are provided by His-171 and Gln-180. Cu(2+) is bound at residue Tyr-182. 2 N-linked (GlcNAc...) asparagine glycosylation sites follow: Asn-189 and Asn-284. The disordered stretch occupies residues 244-320 (PAGGSGGSSP…NPQPTNGGNS (77 aa)). Low complexity predominate over residues 251-296 (SSPAPATTASTPKPTSASAPKPVSTTASTPKPTNGSGSGTGAAHST). Residues 307–319 (TKASNPQPTNGGN) are compositionally biased toward polar residues. The CBM1 domain occupies 323 to 358 (RAAALYGQCGGKGWTGPTSCASGTCKFSNDWYSQCL).

The protein belongs to the polysaccharide monooxygenase AA9 family. It depends on Cu(2+) as a cofactor.

It is found in the secreted. The catalysed reaction is [(1-&gt;4)-beta-D-glucosyl]n+m + reduced acceptor + O2 = 4-dehydro-beta-D-glucosyl-[(1-&gt;4)-beta-D-glucosyl]n-1 + [(1-&gt;4)-beta-D-glucosyl]m + acceptor + H2O.. With respect to regulation, activity in inhibited by excessive amounts of H(2)O(2). In terms of biological role, lytic polysaccharide monooxygenase (LPMO) that depolymerizes crystalline and amorphous polysaccharides via the oxidation of scissile alpha- or beta-(1-4)-glycosidic bonds, yielding C4 oxidation products. Catalysis by LPMOs requires the reduction of the active-site copper from Cu(II) to Cu(I) by a reducing agent and H(2)O(2) or O(2) as a cosubstrate. Degrades various hemicelluloses, in particular xyloglucan. Active on tamarind xyloglucan and konjac glucomannan. Acts on the glucose backbone of xyloglucan, accepting various substitutions (xylose, galactose) in almost allpositions. In contrast to all previously characterized LPMOs, which are active only on polysaccharides, is able to cleave soluble cello-oligosaccharides as short as a tetramer. The cello-oligosaccharide products released by this enzyme contain a C4 gemdiol/keto group at the non-reducing end. Binds to the inner wood cell wall layer and consumes enzymatically generated H(2)O(2). This Neurospora crassa (strain ATCC 24698 / 74-OR23-1A / CBS 708.71 / DSM 1257 / FGSC 987) protein is AA9 family lytic polysaccharide monooxygenase C (gh61-3).